The following is a 362-amino-acid chain: Adenosine deaminase (362 aa).

Positions 19 and 21 each coordinate Zn(2+). Substrate is bound by residues H21, D23, and G181. Zn(2+) is bound at residue H208. E211 (proton donor) is an active-site residue. Residue D300 coordinates Zn(2+).

It belongs to the metallo-dependent hydrolases superfamily. Adenosine and AMP deaminases family. Adenosine deaminase subfamily. Requires Zn(2+) as cofactor.

It catalyses the reaction adenosine + H2O + H(+) = inosine + NH4(+). It carries out the reaction 2'-deoxyadenosine + H2O + H(+) = 2'-deoxyinosine + NH4(+). Functionally, catalyzes the hydrolytic deamination of adenosine and 2-deoxyadenosine. The protein is Adenosine deaminase of Mycobacterium ulcerans (strain Agy99).